The following is a 378-amino-acid chain: Zinc finger protein DPF3 (378 aa).

K99 is covalently cross-linked (Glycyl lysine isopeptide (Lys-Gly) (interchain with G-Cter in SUMO2)). The tract at residues 145-193 (VLENDENVEEGNEEEDLEEDIPKRKNRTRGRARGSAGGRRRHDAASQED) is disordered. Residues 148-163 (NDENVEEGNEEEDLEE) are compositionally biased toward acidic residues. Basic residues predominate over residues 168–186 (RKNRTRGRARGSAGGRRRH). The segment at 198 to 221 (YVCDICGKRYKNRPGLSYHYAHTH) adopts a C2H2-type zinc-finger fold. Residues 225-254 (EEGDEAQDQETRSPPNHRNENHRPQKGPDG) form a disordered region. 2 consecutive PHD-type zinc fingers follow at residues 259–319 (NNYC…CKSC) and 316–366 (CKSC…CWEL). The segment at 317–332 (KSCILCGTSENDDQLL) is interaction with HDGFL2. Residue G323 is modified to Phosphoserine.

Belongs to the requiem/DPF family. Component of the BAF complex, which includes at least actin (ACTB), ARID1A, ARID1B/BAF250, SMARCA2, SMARCA4/BRG1/BAF190A, ACTL6A/BAF53, ACTL6B/BAF53B, SMARCE1/BAF57, SMARCC1/BAF155, SMARCC2/BAF170, SMARCB1/SNF5/INI1, and one or more of SMARCD1/BAF60A, SMARCD2/BAF60B, or SMARCD3/BAF60C. In muscle cells, the BAF complex also contains DPF3. Interacts with acetylated histones H3 and H4. Component of neuron-specific chromatin remodeling complex (nBAF complex) composed of at least, ARID1A/BAF250A or ARID1B/BAF250B, SMARCD1/BAF60A, SMARCD3/BAF60C, SMARCA2/BRM/BAF190B, SMARCA4/BRG1/BAF190A, SMARCB1/BAF47, SMARCC1/BAF155, SMARCE1/BAF57, SMARCC2/BAF170, DPF1/BAF45B, DPF3/BAF45C, ACTL6B/BAF53B and actin. In terms of assembly, interacts with HDGFL2, SMARCA4/BRG1/BAF190A, SMARCC1/BAF155 and SMARCD1/BAF60A. Post-translationally, phosphorylation at Ser-323 enhances its interaction with HDGFL2.

It is found in the nucleus. Functionally, belongs to the neuron-specific chromatin remodeling complex (nBAF complex). During neural development a switch from a stem/progenitor to a post-mitotic chromatin remodeling mechanism occurs as neurons exit the cell cycle and become committed to their adult state. The transition from proliferating neural stem/progenitor cells to post-mitotic neurons requires a switch in subunit composition of the npBAF and nBAF complexes. As neural progenitors exit mitosis and differentiate into neurons, npBAF complexes which contain ACTL6A/BAF53A and PHF10/BAF45A, are exchanged for homologous alternative ACTL6B/BAF53B and DPF1/BAF45B or DPF3/BAF45C subunits in neuron-specific complexes (nBAF). The npBAF complex is essential for the self-renewal/proliferative capacity of the multipotent neural stem cells. The nBAF complex along with CREST plays a role regulating the activity of genes essential for dendrite growth. Muscle-specific component of the BAF complex, a multiprotein complex involved in transcriptional activation and repression of select genes by chromatin remodeling (alteration of DNA-nucleosome topology). Specifically binds acetylated lysines on histone 3 and 4 (H3K14ac, H3K9ac, H4K5ac, H4K8ac, H4K12ac, H4K16ac). In the complex, it acts as a tissue-specific anchor between histone acetylations and methylations and chromatin remodeling. It thereby probably plays an essential role in heart and skeletal muscle development. Its function is as follows. Acts as a regulator of myogenesis in cooperation with HDGFL2. Mediates the interaction of HDGFL2 with the BAF complex. HDGFL2-DPF3a activate myogenic genes by increasing chromatin accessibility through recruitment of SMARCA4/BRG1/BAF190A (ATPase subunit of the BAF complex) to myogenic gene promoters. This chain is Zinc finger protein DPF3 (DPF3), found in Homo sapiens (Human).